The primary structure comprises 450 residues: Protein tweety homolog 1 (450 aa).

Topologically, residues 1–43 (MGAPPGYRPSAWVHLLHQLPRADFQLRPVPSVFAPQEQEYQQA) are extracellular. Residues 44-64 (LLLVAALAGLGLGLSLIFIAV) form a helical membrane-spanning segment. Residues 65-88 (YLIRFCCCRPPEPPGSKIPSPGGG) are Cytoplasmic-facing. Residues 89-109 (CVTWSCIVALLAGCTGIGIGF) traverse the membrane as a helical segment. Residues 110–214 (YGNSETSDGV…NVSFVEEYRW (105 aa)) are Extracellular-facing. Residues Asn-130 and Asn-205 are each glycosylated (N-linked (GlcNAc...) asparagine). A helical transmembrane segment spans residues 215–235 (LAYVLLLLLELLVCLFTLLGL). Residues 236 to 240 (AKQSK) are Cytoplasmic-facing. Residues 241–261 (WLVIVMTVMSLLVLVLSWGSM) form a helical membrane-spanning segment. Residues 262–390 (GLEAATAVGL…LRGLCEDALE (129 aa)) lie on the Extracellular side of the membrane. Disulfide bonds link Cys-275-Cys-385 and Cys-303-Cys-370. Residues Asn-284 and Asn-355 are each glycosylated (N-linked (GlcNAc...) asparagine). A helical transmembrane segment spans residues 391–411 (GLLFLLLFSLLSAGALATALC). The Cytoplasmic segment spans residues 412 to 450 (SLPRAWALFPPSDDYDDTDDDDPFNPQESKRFVQWQSSI). Positions 428 to 450 (DTDDDDPFNPQESKRFVQWQSSI) are disordered. A Phosphoserine modification is found at Ser-440.

This sequence belongs to the tweety family. As to quaternary structure, homotetramer; disulfide-linked. Homodimer. N-glycosylated. Contains high-mannose, hybrid and complex oligosaccharides. As to expression, expressed in brain, eye, ovary and testis, and at lower levels in muscle, placenta, liver and lung.

Its subcellular location is the cell membrane. The enzyme catalyses chloride(in) = chloride(out). It catalyses the reaction L-glutamate(out) = L-glutamate(in). Calcium-independent, swelling-dependent volume-regulated anion channel (VRAC-swell) which plays a pivotal role in the process of regulatory volume decrease (RVD) in the brain through the efflux of anions like chloride and organic osmolytes like glutamate. Its function is as follows. Ca(2+)-independent, swelling-activated chloride channel, possibly involved in regulation of cell volume. This chain is Protein tweety homolog 1 (TTYH1), found in Homo sapiens (Human).